Consider the following 148-residue polypeptide: Transcription antitermination protein NusB (148 aa).

It belongs to the NusB family.

Involved in transcription antitermination. Required for transcription of ribosomal RNA (rRNA) genes. Binds specifically to the boxA antiterminator sequence of the ribosomal RNA (rrn) operons. The sequence is that of Transcription antitermination protein NusB from Aquifex aeolicus (strain VF5).